A 345-amino-acid polypeptide reads, in one-letter code: Guanine nucleotide-binding protein G(i) subunit alpha-3 (345 aa).

Residues 23–345 (KEVKLLLLGA…KSNLMECGLY (323 aa)) form the G-alpha domain. Positions 26–39 (KLLLLGAGESGKST) are G1 motif. GTP-binding residues include G33, E34, S35, G36, K37, S38, T39, D141, S142, L166, R167, T168, R169, V170, K171, T172, V192, G194, N260, K261, D263, L264, C316, A317, and T318. A Mg(2+)-binding site is contributed by S38. The tract at residues 164 to 172 (DVLRTRVKT) is G2 motif. T172 provides a ligand contact to Mg(2+). A G3 motif region spans residues 187 to 196 (FKMFDVGGQR). Positions 256–263 (ILFLNKKD) are G4 motif. The tract at residues 315 to 320 (TCATDT) is G5 motif.

This sequence belongs to the G-alpha family. G(i/o/t/z) subfamily. As to quaternary structure, heterotrimeric G proteins are composed of 3 units; alpha, beta and gamma. The alpha subunit contains the guanine nucleotide binding site. GTP binding causes dissociation of the heterotrimer, liberating the individual subunits so that they can interact with downstream effector proteins.

Its subcellular location is the cytoplasm. It is found in the cell membrane. It localises to the cytoskeleton. The protein localises to the microtubule organizing center. The protein resides in the centrosome. Its subcellular location is the membrane. Functionally, heterotrimeric guanine nucleotide-binding proteins (G proteins) function as transducers downstream of G protein-coupled receptors (GPCRs) in numerous signaling cascades. The alpha chain contains the guanine nucleotide binding site and alternates between an active, GTP-bound state and an inactive, GDP-bound state. Signaling by an activated GPCR promotes GDP release and GTP binding. The alpha subunit has a low GTPase activity that converts bound GTP to GDP, thereby terminating the signal. Both GDP release and GTP hydrolysis are modulated by numerous regulatory proteins. Signaling is mediated via effector proteins, such as adenylate cyclase. Inhibits adenylate cyclase activity, leading to decreased intracellular cAMP levels. Stimulates the activity of receptor-regulated K(+) channels. The active GTP-bound form prevents the association of RGS14 with centrosomes and is required for the translocation of RGS14 from the cytoplasm to the plasma membrane. May play a role in cell division. The active GTP-bound form activates the calcium permeant TRPC5 ion channels. The chain is Guanine nucleotide-binding protein G(i) subunit alpha-3 (gnai3) from Xenopus laevis (African clawed frog).